Consider the following 329-residue polypeptide: Isopenicillin N synthase (329 aa).

Residues arginine 87, tyrosine 91, serine 183, and tyrosine 189 each contribute to the isopenicillin N site. N-[(5S)-5-amino-5-carboxypentanoyl]-L-cysteinyl-D-valine is bound by residues arginine 87, tyrosine 91, serine 183, tyrosine 189, histidine 212, and aspartate 214. Positions 180–286 (TLSSVSLIRY…RLSLPFFLNA (107 aa)) constitute a Fe2OG dioxygenase domain. Fe(2+) is bound by residues histidine 212, aspartate 214, and histidine 268. A 2-oxoglutarate-binding site is contributed by arginine 277. Serine 279 is an isopenicillin N binding site. N-[(5S)-5-amino-5-carboxypentanoyl]-L-cysteinyl-D-valine is bound at residue serine 279.

This sequence belongs to the iron/ascorbate-dependent oxidoreductase family. Requires Fe cation as cofactor. It depends on L-ascorbate as a cofactor.

It catalyses the reaction N-[(5S)-5-amino-5-carboxypentanoyl]-L-cysteinyl-D-valine + O2 = isopenicillin N + 2 H2O. It participates in antibiotic biosynthesis; penicillin G biosynthesis; penicillin G from L-alpha-aminoadipate and L-cysteine and L-valine: step 2/3. Its function is as follows. Removes, in the presence of oxygen, 4 hydrogen atoms from delta-L-(alpha-aminoadipyl)-L-cysteinyl-D-valine (ACV) to form the azetidinone and thiazolidine rings of isopenicillin. This is Isopenicillin N synthase (pcbC) from Streptomyces jumonjinensis.